Consider the following 211-residue polypeptide: UPF0637 protein BLi01683/BL05149 (211 aa).

It belongs to the UPF0637 family.

This Bacillus licheniformis (strain ATCC 14580 / DSM 13 / JCM 2505 / CCUG 7422 / NBRC 12200 / NCIMB 9375 / NCTC 10341 / NRRL NRS-1264 / Gibson 46) protein is UPF0637 protein BLi01683/BL05149.